Here is a 197-residue protein sequence, read N- to C-terminus: Peptidyl-tRNA hydrolase (197 aa).

Tyrosine 23 provides a ligand contact to tRNA. Histidine 28 functions as the Proton acceptor in the catalytic mechanism. TRNA is bound by residues phenylalanine 73, asparagine 75, and asparagine 121.

Belongs to the PTH family. As to quaternary structure, monomer.

It localises to the cytoplasm. It carries out the reaction an N-acyl-L-alpha-aminoacyl-tRNA + H2O = an N-acyl-L-amino acid + a tRNA + H(+). Its function is as follows. Hydrolyzes ribosome-free peptidyl-tRNAs (with 1 or more amino acids incorporated), which drop off the ribosome during protein synthesis, or as a result of ribosome stalling. Functionally, catalyzes the release of premature peptidyl moieties from peptidyl-tRNA molecules trapped in stalled 50S ribosomal subunits, and thus maintains levels of free tRNAs and 50S ribosomes. In Frankia casuarinae (strain DSM 45818 / CECT 9043 / HFP020203 / CcI3), this protein is Peptidyl-tRNA hydrolase.